Here is a 317-residue protein sequence, read N- to C-terminus: tRNA-dihydrouridine(16) synthase (317 aa).

Residues 7–9 (PME) and Gln-68 contribute to the FMN site. Cys-98 acts as the Proton donor in catalysis. FMN-binding positions include Lys-139, 199 to 201 (NGE), and 223 to 224 (GR).

This sequence belongs to the Dus family. DusC subfamily. FMN serves as cofactor.

The enzyme catalyses 5,6-dihydrouridine(16) in tRNA + NADP(+) = uridine(16) in tRNA + NADPH + H(+). It carries out the reaction 5,6-dihydrouridine(16) in tRNA + NAD(+) = uridine(16) in tRNA + NADH + H(+). Its function is as follows. Catalyzes the synthesis of 5,6-dihydrouridine (D), a modified base found in the D-loop of most tRNAs, via the reduction of the C5-C6 double bond in target uridines. Specifically modifies U16 in tRNAs. This chain is tRNA-dihydrouridine(16) synthase, found in Pseudomonas syringae pv. tomato (strain ATCC BAA-871 / DC3000).